The following is a 552-amino-acid chain: CTP synthase (552 aa).

The interval 1 to 270 is amidoligase domain; the sequence is MTKYVFVTGG…DRIICEELKL (270 aa). Residue Ser13 participates in CTP binding. Ser13 serves as a coordination point for UTP. ATP contacts are provided by residues 14–19 and Asp71; that span reads SLGKGI. Residues Asp71 and Glu144 each contribute to the Mg(2+) site. Residues 151-153, 191-196, and Lys227 contribute to the CTP site; these read DIE and KTKPTQ. UTP contacts are provided by residues 191-196 and Lys227; that span reads KTKPTQ. The region spanning 295 to 547 is the Glutamine amidotransferase type-1 domain; it reads TIGMVGKYVD…VEAALANKQA (253 aa). Gly356 provides a ligand contact to L-glutamine. Cys383 serves as the catalytic Nucleophile; for glutamine hydrolysis. Residues 384–387, Glu407, and Arg473 each bind L-glutamine; that span reads LGMQ. Active-site residues include His520 and Glu522.

It belongs to the CTP synthase family. Homotetramer.

The enzyme catalyses UTP + L-glutamine + ATP + H2O = CTP + L-glutamate + ADP + phosphate + 2 H(+). It carries out the reaction L-glutamine + H2O = L-glutamate + NH4(+). It catalyses the reaction UTP + NH4(+) + ATP = CTP + ADP + phosphate + 2 H(+). Its pathway is pyrimidine metabolism; CTP biosynthesis via de novo pathway; CTP from UDP: step 2/2. With respect to regulation, allosterically activated by GTP, when glutamine is the substrate; GTP has no effect on the reaction when ammonia is the substrate. The allosteric effector GTP functions by stabilizing the protein conformation that binds the tetrahedral intermediate(s) formed during glutamine hydrolysis. Inhibited by the product CTP, via allosteric rather than competitive inhibition. Catalyzes the ATP-dependent amination of UTP to CTP with either L-glutamine or ammonia as the source of nitrogen. Regulates intracellular CTP levels through interactions with the four ribonucleotide triphosphates. This is CTP synthase from Burkholderia cenocepacia (strain ATCC BAA-245 / DSM 16553 / LMG 16656 / NCTC 13227 / J2315 / CF5610) (Burkholderia cepacia (strain J2315)).